The following is a 370-amino-acid chain: Chorismate synthase (370 aa).

Residues 41–60 (IQGDLDRRKPGTSRHVTQRK) form a disordered region. NADP(+)-binding residues include Arg48 and Arg54. FMN contacts are provided by residues 125 to 127 (RSS), 238 to 239 (NA), Gly278, 293 to 297 (KPTSS), and Arg319.

Belongs to the chorismate synthase family. Homotetramer. FMNH2 is required as a cofactor.

The enzyme catalyses 5-O-(1-carboxyvinyl)-3-phosphoshikimate = chorismate + phosphate. It participates in metabolic intermediate biosynthesis; chorismate biosynthesis; chorismate from D-erythrose 4-phosphate and phosphoenolpyruvate: step 7/7. Catalyzes the anti-1,4-elimination of the C-3 phosphate and the C-6 proR hydrogen from 5-enolpyruvylshikimate-3-phosphate (EPSP) to yield chorismate, which is the branch point compound that serves as the starting substrate for the three terminal pathways of aromatic amino acid biosynthesis. This reaction introduces a second double bond into the aromatic ring system. The protein is Chorismate synthase of Cupriavidus pinatubonensis (strain JMP 134 / LMG 1197) (Cupriavidus necator (strain JMP 134)).